The chain runs to 116 residues: Small ribosomal subunit protein bS6 (116 aa).

A disordered region spans residues 94–116; sequence ESITEPSPLTKPKEDRKGDSEAA. Basic and acidic residues predominate over residues 104–116; it reads KPKEDRKGDSEAA.

This sequence belongs to the bacterial ribosomal protein bS6 family.

Its function is as follows. Binds together with bS18 to 16S ribosomal RNA. This is Small ribosomal subunit protein bS6 from Idiomarina loihiensis (strain ATCC BAA-735 / DSM 15497 / L2-TR).